We begin with the raw amino-acid sequence, 460 residues long: Bifunctional protein GlmU (460 aa).

A pyrophosphorylase region spans residues 1–229 (MTNYAIILAA…FNESLGVNDR (229 aa)). UDP-N-acetyl-alpha-D-glucosamine is bound by residues 8–11 (LAAG), Lys-22, Gln-72, and 77–78 (GT). Asp-102 provides a ligand contact to Mg(2+). Positions 139, 154, 169, and 227 each coordinate UDP-N-acetyl-alpha-D-glucosamine. Asn-227 serves as a coordination point for Mg(2+). The interval 230-250 (VALATAETVMRQRITQKHMVN) is linker. An N-acetyltransferase region spans residues 251–460 (GVTFHNPETV…RLAHHPSRSK (210 aa)). UDP-N-acetyl-alpha-D-glucosamine-binding residues include Arg-332 and Lys-350. His-362 acts as the Proton acceptor in catalysis. UDP-N-acetyl-alpha-D-glucosamine-binding residues include Tyr-365 and Asn-376. Residues Ala-379, 385–386 (NY), Ser-404, Ala-422, and Arg-439 contribute to the acetyl-CoA site.

The protein in the N-terminal section; belongs to the N-acetylglucosamine-1-phosphate uridyltransferase family. It in the C-terminal section; belongs to the transferase hexapeptide repeat family. Homotrimer. The cofactor is Mg(2+).

It is found in the cytoplasm. It catalyses the reaction alpha-D-glucosamine 1-phosphate + acetyl-CoA = N-acetyl-alpha-D-glucosamine 1-phosphate + CoA + H(+). The catalysed reaction is N-acetyl-alpha-D-glucosamine 1-phosphate + UTP + H(+) = UDP-N-acetyl-alpha-D-glucosamine + diphosphate. Its pathway is nucleotide-sugar biosynthesis; UDP-N-acetyl-alpha-D-glucosamine biosynthesis; N-acetyl-alpha-D-glucosamine 1-phosphate from alpha-D-glucosamine 6-phosphate (route II): step 2/2. It functions in the pathway nucleotide-sugar biosynthesis; UDP-N-acetyl-alpha-D-glucosamine biosynthesis; UDP-N-acetyl-alpha-D-glucosamine from N-acetyl-alpha-D-glucosamine 1-phosphate: step 1/1. The protein operates within bacterial outer membrane biogenesis; LPS lipid A biosynthesis. Catalyzes the last two sequential reactions in the de novo biosynthetic pathway for UDP-N-acetylglucosamine (UDP-GlcNAc). The C-terminal domain catalyzes the transfer of acetyl group from acetyl coenzyme A to glucosamine-1-phosphate (GlcN-1-P) to produce N-acetylglucosamine-1-phosphate (GlcNAc-1-P), which is converted into UDP-GlcNAc by the transfer of uridine 5-monophosphate (from uridine 5-triphosphate), a reaction catalyzed by the N-terminal domain. In Streptococcus pyogenes serotype M3 (strain ATCC BAA-595 / MGAS315), this protein is Bifunctional protein GlmU.